Consider the following 470-residue polypeptide: NADH-quinone oxidoreductase subunit D (470 aa).

A compositionally biased stretch (low complexity) spans 1-18; that stretch reads MTPSTSTPHTSTAPHTST. Residues 1-37 form a disordered region; that stretch reads MTPSTSTPHTSTAPHTSTGQSTDGAAQPGDGSSAYEA.

This sequence belongs to the complex I 49 kDa subunit family. NDH-1 is composed of 14 different subunits. Subunits NuoB, C, D, E, F, and G constitute the peripheral sector of the complex.

The protein localises to the cell membrane. It catalyses the reaction a quinone + NADH + 5 H(+)(in) = a quinol + NAD(+) + 4 H(+)(out). Functionally, NDH-1 shuttles electrons from NADH, via FMN and iron-sulfur (Fe-S) centers, to quinones in the respiratory chain. The immediate electron acceptor for the enzyme in this species is believed to be a menaquinone. Couples the redox reaction to proton translocation (for every two electrons transferred, four hydrogen ions are translocated across the cytoplasmic membrane), and thus conserves the redox energy in a proton gradient. In Frankia alni (strain DSM 45986 / CECT 9034 / ACN14a), this protein is NADH-quinone oxidoreductase subunit D.